The chain runs to 167 residues: NAD(P)H-quinone oxidoreductase subunit I, chloroplastic (167 aa).

2 consecutive 4Fe-4S ferredoxin-type domains span residues 55–84 (GRIH…VDWK) and 95–124 (LNYS…MTEE). [4Fe-4S] cluster contacts are provided by C64, C67, C70, C74, C104, C107, C110, and C114.

It belongs to the complex I 23 kDa subunit family. NDH is composed of at least 16 different subunits, 5 of which are encoded in the nucleus. [4Fe-4S] cluster is required as a cofactor.

It is found in the plastid. Its subcellular location is the chloroplast thylakoid membrane. It carries out the reaction a plastoquinone + NADH + (n+1) H(+)(in) = a plastoquinol + NAD(+) + n H(+)(out). The enzyme catalyses a plastoquinone + NADPH + (n+1) H(+)(in) = a plastoquinol + NADP(+) + n H(+)(out). In terms of biological role, NDH shuttles electrons from NAD(P)H:plastoquinone, via FMN and iron-sulfur (Fe-S) centers, to quinones in the photosynthetic chain and possibly in a chloroplast respiratory chain. The immediate electron acceptor for the enzyme in this species is believed to be plastoquinone. Couples the redox reaction to proton translocation, and thus conserves the redox energy in a proton gradient. This chain is NAD(P)H-quinone oxidoreductase subunit I, chloroplastic, found in Draba nemorosa (Woodland whitlowgrass).